A 473-amino-acid chain; its full sequence is Photosystem II CP43 reaction center protein (473 aa).

The propeptide occupies 1–14 (MKTLYSLRRFYPVE). Thr15 is subject to N-acetylthreonine. Thr15 is subject to Phosphothreonine. A run of 5 helical transmembrane segments spans residues 69-93 (LFEVAHFVPEKPMYEQGLILLPHLA), 134-155 (LLGPETLEESFPFFGYVWKDRN), 178-200 (KALYFGGVYDTWAPGGGDVRKIT), 255-275 (KPFAWARRAFVWSGEAYLSYS), and 291-312 (WFNNTAYPSEFYGPTGPEASQA). Glu367 contributes to the [CaMn4O5] cluster binding site. Residues 447 to 471 (RARAAAAGFEKGIDRDLEPVLSMTP) traverse the membrane as a helical segment.

Belongs to the PsbB/PsbC family. PsbC subfamily. As to quaternary structure, PSII is composed of 1 copy each of membrane proteins PsbA, PsbB, PsbC, PsbD, PsbE, PsbF, PsbH, PsbI, PsbJ, PsbK, PsbL, PsbM, PsbT, PsbX, PsbY, PsbZ, Psb30/Ycf12, at least 3 peripheral proteins of the oxygen-evolving complex and a large number of cofactors. It forms dimeric complexes. The cofactor is Binds multiple chlorophylls and provides some of the ligands for the Ca-4Mn-5O cluster of the oxygen-evolving complex. It may also provide a ligand for a Cl- that is required for oxygen evolution. PSII binds additional chlorophylls, carotenoids and specific lipids..

It is found in the plastid. The protein resides in the chloroplast thylakoid membrane. One of the components of the core complex of photosystem II (PSII). It binds chlorophyll and helps catalyze the primary light-induced photochemical processes of PSII. PSII is a light-driven water:plastoquinone oxidoreductase, using light energy to abstract electrons from H(2)O, generating O(2) and a proton gradient subsequently used for ATP formation. This Phalaenopsis aphrodite subsp. formosana (Moth orchid) protein is Photosystem II CP43 reaction center protein.